Reading from the N-terminus, the 91-residue chain is Putative regulatory protein Helmi_20580 (91 aa).

Belongs to the RemA family.

In Heliobacterium modesticaldum (strain ATCC 51547 / Ice1), this protein is Putative regulatory protein Helmi_20580.